The following is a 345-amino-acid chain: Protein RecA (345 aa).

Gly-63 to Thr-70 is a binding site for ATP. The disordered stretch occupies residues Val-326–Asp-345. Acidic residues predominate over residues Pro-335–Asp-345.

The protein belongs to the RecA family.

The protein localises to the cytoplasm. Its function is as follows. Can catalyze the hydrolysis of ATP in the presence of single-stranded DNA, the ATP-dependent uptake of single-stranded DNA by duplex DNA, and the ATP-dependent hybridization of homologous single-stranded DNAs. It interacts with LexA causing its activation and leading to its autocatalytic cleavage. The polypeptide is Protein RecA (Gluconobacter oxydans (strain 621H) (Gluconobacter suboxydans)).